The chain runs to 241 residues: Superoxide dismutase [Mn] 2, mitochondrial (241 aa).

4 residues coordinate Mn(2+): His60, His108, Asp197, and His201.

Belongs to the iron/manganese superoxide dismutase family. Homotetramer. Mn(2+) serves as cofactor.

The protein localises to the mitochondrion matrix. The enzyme catalyses 2 superoxide + 2 H(+) = H2O2 + O2. Functionally, destroys superoxide anion radicals which are normally produced within the cells and which are toxic to biological systems. This is Superoxide dismutase [Mn] 2, mitochondrial (MSD2) from Arabidopsis thaliana (Mouse-ear cress).